Here is a 259-residue protein sequence, read N- to C-terminus: Hydroxyethylthiazole kinase (259 aa).

Met-37 serves as a coordination point for substrate. The ATP site is built by Arg-113 and Thr-158. Position 185 (Gly-185) interacts with substrate.

This sequence belongs to the Thz kinase family. Requires Mg(2+) as cofactor.

It catalyses the reaction 5-(2-hydroxyethyl)-4-methylthiazole + ATP = 4-methyl-5-(2-phosphooxyethyl)-thiazole + ADP + H(+). Its pathway is cofactor biosynthesis; thiamine diphosphate biosynthesis; 4-methyl-5-(2-phosphoethyl)-thiazole from 5-(2-hydroxyethyl)-4-methylthiazole: step 1/1. Functionally, catalyzes the phosphorylation of the hydroxyl group of 4-methyl-5-beta-hydroxyethylthiazole (THZ). This is Hydroxyethylthiazole kinase from Helicobacter pylori (strain Shi470).